The sequence spans 377 residues: Leukocyte elastase inhibitor (377 aa).

Residue Met1 is modified to N-acetylmethionine. Lys136 is modified (N6-acetyllysine). Ser298 is subject to Phosphoserine. The segment at 349 to 377 (EFVADHPFIFFIRHKPSSNILFLGRLSSP) is CARD-binding motif (CBM).

The protein belongs to the serpin family. Ov-serpin subfamily. Monomer. Interacts (via C-terminus) with CASP1; CASP4 (via CARD domain) and CASP5; these interactions regulate the activity of inflammatory caspases. Interacts with PRTN3. Interacts with GZMH.

It localises to the secreted. It is found in the cytoplasm. The protein resides in the cytolytic granule. Its subcellular location is the early endosome. Neutrophil serine protease inhibitor that plays an essential role in the regulation of the innate immune response, inflammation and cellular homeostasis. Acts primarily to protect the cell from proteases released in the cytoplasm during stress or infection. These proteases are important in killing microbes but when released from granules, these potent enzymes also destroy host proteins and contribute to mortality. Regulates the activity of the neutrophil proteases elastase, cathepsin G, proteinase-3, chymase, chymotrypsin, and kallikrein-3. Also acts as a potent intracellular inhibitor of GZMH by directly blocking its proteolytic activity. During inflammation, limits the activity of inflammatory caspases CASP1, CASP4 and CASP5 by suppressing their caspase-recruitment domain (CARD) oligomerization and enzymatic activation. When secreted, promotes the proliferation of beta-cells via its protease inhibitory function. The chain is Leukocyte elastase inhibitor (SERPINB1) from Bos taurus (Bovine).